The following is a 416-amino-acid chain: Serine hydroxymethyltransferase (416 aa).

Residues L121 and 125-127 (GHL) contribute to the (6S)-5,6,7,8-tetrahydrofolate site. N6-(pyridoxal phosphate)lysine is present on K229.

Belongs to the SHMT family. As to quaternary structure, homodimer. Requires pyridoxal 5'-phosphate as cofactor.

It localises to the cytoplasm. It carries out the reaction (6R)-5,10-methylene-5,6,7,8-tetrahydrofolate + glycine + H2O = (6S)-5,6,7,8-tetrahydrofolate + L-serine. It participates in one-carbon metabolism; tetrahydrofolate interconversion. Its pathway is amino-acid biosynthesis; glycine biosynthesis; glycine from L-serine: step 1/1. Its function is as follows. Catalyzes the reversible interconversion of serine and glycine with tetrahydrofolate (THF) serving as the one-carbon carrier. This reaction serves as the major source of one-carbon groups required for the biosynthesis of purines, thymidylate, methionine, and other important biomolecules. Also exhibits THF-independent aldolase activity toward beta-hydroxyamino acids, producing glycine and aldehydes, via a retro-aldol mechanism. This is Serine hydroxymethyltransferase from Neisseria gonorrhoeae.